The chain runs to 744 residues: Cell division cycle protein 27 homolog B (744 aa).

The TPR 1 repeat unit spans residues 101–134; that stretch reads AAGHYLLGLIYKYTDRRKNAAQQFKQSLTIDPLL. The span at 180-199 shows a compositional bias: polar residues; sequence NEERNSTSTKNTSSEDYSPR. Disordered regions lie at residues 180–218 and 359–390; these read NEER…NFHS and ENMD…NDQE. The span at 363–374 shows a compositional bias: basic and acidic residues; it reads EGVRGEPFDDSR. A compositionally biased stretch (polar residues) spans 375-387; it reads PNTASTTGSMASN. 7 TPR repeats span residues 450–483, 518–551, 553–585, 587–619, 621–653, 655–687, and 688–721; these read GWVL…SPYC, PQSW…NPRF, YAHT…DTRH, NAWY…NPSS, VIMS…DRKN, LPMY…APSE, and SSVY…KPPA.

Belongs to the APC3/CDC27 family. The APC/C is composed of at least 10 subunits. Can homodimerize. Interacts with APC2, APC10, FZR2 and FZR3. Interacts with PANS1. Interacts with SAMBA. Specifically expressed in dividing and elongating cells.

It is found in the nucleus. Its pathway is protein modification; protein ubiquitination. Its function is as follows. Component of the anaphase promoting complex/cyclosome (APC/C), a cell cycle-regulated E3 ubiquitin-protein ligase complex that controls progression through mitosis and the G1 phase of the cell cycle. The APC/C complex controls several key steps in the cell cycle by mediating ubiquitination and subsequent degradation of target proteins such as cyclins. The APC/C complex is required for the female gametophyte development and is involved in several aspect of development by controlling cell division and cell elongation. Involved in the control of endoreduplication. Functionally redundant with CDC27A in the control of gametophyte development. The protein is Cell division cycle protein 27 homolog B (CDC27B) of Arabidopsis thaliana (Mouse-ear cress).